Consider the following 164-residue polypeptide: MNPIHFDLTLVVQVLSFLLLVYILRRFAWNPLINMMEERRSQIEANIANAEKERLQAEQIKREYQEEMRKARQEAQEVIAKATKLSEQRAAEILAAAHGEAEKIKQSALADIERERDRAIAQVQAQVADLSVAVAEKIIRKNLDVRGQEDMIEQFIQEVGELPC.

Residues 4–24 (IHFDLTLVVQVLSFLLLVYIL) traverse the membrane as a helical segment.

The protein belongs to the ATPase B chain family. In terms of assembly, F-type ATPases have 2 components, F(1) - the catalytic core - and F(0) - the membrane proton channel. F(1) has five subunits: alpha(3), beta(3), gamma(1), delta(1), epsilon(1). F(0) has three main subunits: a(1), b(2) and c(10-14). The alpha and beta chains form an alternating ring which encloses part of the gamma chain. F(1) is attached to F(0) by a central stalk formed by the gamma and epsilon chains, while a peripheral stalk is formed by the delta and b chains.

The protein localises to the cell membrane. Functionally, f(1)F(0) ATP synthase produces ATP from ADP in the presence of a proton or sodium gradient. F-type ATPases consist of two structural domains, F(1) containing the extramembraneous catalytic core and F(0) containing the membrane proton channel, linked together by a central stalk and a peripheral stalk. During catalysis, ATP synthesis in the catalytic domain of F(1) is coupled via a rotary mechanism of the central stalk subunits to proton translocation. In terms of biological role, component of the F(0) channel, it forms part of the peripheral stalk, linking F(1) to F(0). The polypeptide is ATP synthase subunit b (Desulfitobacterium hafniense (strain Y51)).